The primary structure comprises 366 residues: MRRWICCGDKKGDSDLSNEEVHLKSPWQNSEANQKNQKPQAVVKPEAQKEALPIEVPPLSVDEVKEKTDNFGSKSLIGEGSYGRVYYATLNDGKAVALKKLDVAPEAETNTEFLNQVSMVSRLKHENLIQLVGYCVDENLRVLAYEFATMGSLHDILHGRKGVQGAQPGPTLDWLTRVKIAVEAARGLEYLHEKVQPPVIHRDIRSSNVLLFEDYQAKVADFNLSNQAPDNAARLHSTRVLGTFGYHAPEYAMTGQLTQKSDVYSFGVVLLELLTGRKPVDHTMPRGQQSLVTWATPRLSEDKVKQCVDPKLKGEYPPKSVAKLAAVAALCVQYESEFRPNMSIVVKALQPLLKPPAPAPAPVPES.

Basic and acidic residues predominate over residues 8-23; that stretch reads GDKKGDSDLSNEEVHL. A disordered region spans residues 8 to 50; sequence GDKKGDSDLSNEEVHLKSPWQNSEANQKNQKPQAVVKPEAQKE. Over residues 26–39 the composition is skewed to polar residues; it reads PWQNSEANQKNQKP. In terms of domain architecture, Protein kinase spans 71 to 353; the sequence is FGSKSLIGEG…IVVKALQPLL (283 aa). Residues 77–85 and K99 contribute to the ATP site; that span reads IGEGSYGRV. The Proton acceptor role is filled by D203.

The protein belongs to the protein kinase superfamily. Tyr protein kinase family. Interacts with OXI1. In terms of processing, autophosphorylated and phosphorylated by OXI1.

The catalysed reaction is L-tyrosyl-[protein] + ATP = O-phospho-L-tyrosyl-[protein] + ADP + H(+). Strongly activated in response to phosphatidic acid (PA) and xylanase in a OXI1- and PDK1-dependent manner, and, to a lesser extent, by hydrogen peroxide and flagellin in a OXI1-dependent manner. Its function is as follows. Probable tyrosine-protein kinase involved in oxidative burst-mediated signaling leading to specific genes expression. In Arabidopsis thaliana (Mouse-ear cress), this protein is PTI1-like tyrosine-protein kinase 2 (PTI12).